We begin with the raw amino-acid sequence, 138 residues long: Histone H3-like centromeric protein A (138 aa).

Positions 1 to 40 (MGPRRQKRKPETPRRRPASPAPAAPRPTPSLGTSSRPLAR) are disordered. Gly-2 is modified (n,N,N-trimethylglycine). Ser-19 is modified (phosphoserine). Positions 19–28 (SPAPAAPRPT) are enriched in pro residues. The segment at 37–52 (PLARRRHTVLKEIRTL) is important for flexibility of DNA ends that protrude from nucleosomes. An H3-like region spans residues 39 to 138 (ARRRHTVLKE…RIRGIQEGLG (100 aa)). A CATD region spans residues 73–114 (CVQFTRGVDFNWQAQALLALQEAAEAFLVHLFEDAYLLSLHA).

The protein belongs to the histone H3 family. Component of centromeric nucleosomes, where DNA is wrapped around a histone octamer core. The octamer contains two molecules each of H2A, H2B, CENPA and H4 assembled in one CENPA-H4 heterotetramer and two H2A-H2B heterodimers. CENPA modulates the DNA-binding characteristics of nucleosomes so that protruding DNA ends have higher flexibility than in nucleosomes containing conventional histone H3. Inhibits binding of histone H1 to nucleosomes, since histone H1 binds preferentially to rigid DNA linkers that protrude from nucleosomes. Nucleosomes containing CENPA also contain histone H2A variants such as MACROH2A and H2A.Z/H2AZ1. The CENPA-H4 heterotetramer is more compact and structurally more rigid than corresponding H3-H4 heterotetramers. Can assemble into nucleosomes that contain both CENPA and histone H3.3; these nucleosomes interact with a single CENPC chain. Heterotrimer composed of HJURP, CENPA and histone H4, where HJURP interacts with the dimer formed by CENPA and histone H4 and prevents tetramerization of CENPA and H4. Component of the CENPA-NAC complex, at least composed of CENPA, CENPC, CENPH, CENPM, CENPN, CENPT and CENPU. Interacts (via CATD domain) with HJURP; the interaction is direct and is required for its localization to centromeres. Interacts with CENPC, CENPN and CENPT; interaction is direct. Part of a centromere complex consisting of CENPA, CENPT and CENPW. Identified in centromere complexes containing histones H2A, H2B and H4, and at least CENPA, CENPB, CENPC, CENPT, CENPN, HJURP, SUPT16H, SSRP1 and RSF1. Can self-associate. The CENPA-H4 heterotetramer can bind DNA by itself (in vitro). Interacts with CDK1, PPP1CA and RBBP7. Trimethylated by NTMT1 at the N-terminal glycine after cleavage of Met-1. Methylation is low before incorporation into nucleosomes and increases with cell cycle progression, with the highest levels in mitotic nucleosomes. In terms of processing, poly-ADP-ribosylated by PARP1.

Its subcellular location is the nucleus. It is found in the chromosome. The protein localises to the centromere. Its function is as follows. Histone H3-like nucleosomal protein that is specifically found in centromeric nucleosomes. Replaces conventional H3 in the nucleosome core of centromeric chromatin that serves as an assembly site for the inner kinetochore. The presence of CENPA subtly modifies the nucleosome structure and the way DNA is wrapped around the nucleosome and gives rise to protruding DNA ends that are less well-ordered and rigid compared to nucleosomes containing histone H3. May serve as an epigenetic mark that propagates centromere identity through replication and cell division. Required for recruitment and assembly of kinetochore proteins, and as a consequence required for progress through mitosis, chromosome segregation and cytokinesis. This chain is Histone H3-like centromeric protein A (CENPA), found in Bos taurus (Bovine).